The primary structure comprises 432 residues: Cyclic 2,3-diphosphoglycerate synthetase (432 aa).

This sequence belongs to the cyclic 2,3-diphosphoglycerate synthetase family.

The protein resides in the cytoplasm. It carries out the reaction (2R)-2,3-bisphosphoglycerate + ATP + H(+) = cyclic (2R)-2,3-bisphosphoglycerate + ADP + phosphate. Catalyzes the formation of cyclic 2,3-diphosphoglycerate (cDPG) by formation of an intramolecular phosphoanhydride bond at the expense of ATP. This is Cyclic 2,3-diphosphoglycerate synthetase from Thermococcus kodakarensis (strain ATCC BAA-918 / JCM 12380 / KOD1) (Pyrococcus kodakaraensis (strain KOD1)).